A 252-amino-acid chain; its full sequence is MSRKPIIAGNWKMNKNPQEAKAFVEAVASKLPSTDLVDVAVAAPAVDLVTTIEAAKDSVLKVAAQNCYFENTGAFTGETSPKVLAEMGADYVVIGHSERRDYFHETDEDINKKAKAIFANGLTPIVCCGESLETYEAGKAVEFVGAQVSAALAGLSAEQVASLVLAYEPIWAIGTGKSATQDDAQNMCKAVRDVVAADFGQEVADKVRVQYGGSVKPENVKDYMACPDVDGALVGGASLEAGSFLALLDFLN.

10–12 is a substrate binding site; sequence NWK. The Electrophile role is filled by His96. Residue Glu168 is the Proton acceptor of the active site. Residues Gly174, Ser214, and 235 to 236 contribute to the substrate site; that span reads GG.

Belongs to the triosephosphate isomerase family. In terms of assembly, homodimer.

Its subcellular location is the cytoplasm. It carries out the reaction D-glyceraldehyde 3-phosphate = dihydroxyacetone phosphate. Its pathway is carbohydrate biosynthesis; gluconeogenesis. It functions in the pathway carbohydrate degradation; glycolysis; D-glyceraldehyde 3-phosphate from glycerone phosphate: step 1/1. Involved in the gluconeogenesis. Catalyzes stereospecifically the conversion of dihydroxyacetone phosphate (DHAP) to D-glyceraldehyde-3-phosphate (G3P). In Streptococcus pyogenes serotype M5 (strain Manfredo), this protein is Triosephosphate isomerase.